The following is a 3681-amino-acid chain: E3 ubiquitin-protein ligase UPL1 (3681 aa).

Over residues 882–891 (DEKKSVDRGS) the composition is skewed to basic and acidic residues. The interval 882-912 (DEKKSVDRGSDNSVSASSSTAERESDEDSSN) is disordered. The segment covering 892 to 901 (DNSVSASSST) has biased composition (low complexity). The UBA domain occupies 1269-1310 (QLDESIVGMIVEMGFSRSRAEIALRRVGTNSVEMAMDWLFTN). One can recognise a UIM domain in the interval 1316 to 1335 (QEDDELAQALALSLGNSSET). Disordered regions lie at residues 1332–1358 (SSET…KEPP), 1768–1802 (MEVD…KAEI), 2015–2094 (EQLK…MRIE), 2125–2151 (ENRA…EDAD), 2253–2287 (RQTG…TASV), 2401–2435 (NTTE…QSEE), 2483–2505 (PLPL…DGAP), 2537–2606 (IAPP…APEV), 2975–3003 (SPSS…DAES), and 3228–3254 (TAGE…KTDG). Composition is skewed to basic and acidic residues over residues 1336–1345 (PKLEDTEKPV), 1782–1802 (KVGE…KAEI), and 2017–2037 (LKSE…HDSH). Polar residues predominate over residues 2038-2087 (GNSTETEADELNQNNSSLQQVTDAAGNGQEQAQVSSQSAGERGSSQTQAM). Positions 2130–2151 (DDVDDDMGDEGEDDEGDDEDAD) are enriched in acidic residues. The segment covering 2253–2265 (RQTGRSSLDRSGS) has biased composition (basic and acidic residues). Residues 2277-2287 (RPSQTGNTASV) are compositionally biased toward polar residues. Position 2598 is a phosphoserine (Ser2598). A compositionally biased stretch (basic and acidic residues) spans 2982 to 3002 (EKLENKPVGEEASSETRKDAE). Positions 3237-3247 (AHGSSSKTSVD) are enriched in polar residues. In terms of domain architecture, HECT spans 3340–3681 (SPQDLKGRLN…HEASEGFGFA (342 aa)). The active-site Glycyl thioester intermediate is Cys3648.

The protein belongs to the UPL family. TOM1/PTR1 subfamily. In terms of tissue distribution, widely expressed. Expressed in root, stem, cauline and rosette leaf, seedling and flower (at protein level).

It carries out the reaction S-ubiquitinyl-[E2 ubiquitin-conjugating enzyme]-L-cysteine + [acceptor protein]-L-lysine = [E2 ubiquitin-conjugating enzyme]-L-cysteine + N(6)-ubiquitinyl-[acceptor protein]-L-lysine.. The protein operates within protein modification; protein ubiquitination. In terms of biological role, probable E3 ubiquitin-protein ligase which mediates ubiquitination and subsequent proteasomal degradation of target proteins. This Arabidopsis thaliana (Mouse-ear cress) protein is E3 ubiquitin-protein ligase UPL1 (UPL1).